The chain runs to 619 residues: ATP-dependent RNA helicase dbp9 (619 aa).

Residues 1-30 (MKRKLDANDVPSTEVAEEKETKDADNTDFE) are disordered. The segment covering 16–25 (AEEKETKDAD) has biased composition (basic and acidic residues). Residues 27-55 (TDFESLNLDPRLRQALIREQFTKPTPVQS) carry the Q motif motif. A Helicase ATP-binding domain is found at 58 to 236 (IPLALEGKDI…GLFCRSPVIL (179 aa)). 71–78 (AKTGSGKT) serves as a coordination point for ATP. The short motif at 184–187 (DEAD) is the DEAD box element. Residues 247 to 484 (GISQFVVRCA…EVKPYHFEMK (238 aa)) enclose the Helicase C-terminal domain. Disordered stretches follow at residues 339-390 (SRTS…GKAK) and 582-619 (GDNR…RGRK). A compositionally biased stretch (basic and acidic residues) spans 345-362 (KSKEATDGDDEAKDKMGS). Positions 587–604 (RKAREKNRGKGKGRKPSG) are enriched in basic residues.

This sequence belongs to the DEAD box helicase family. DDX56/DBP9 subfamily.

Its subcellular location is the nucleus. The protein resides in the nucleolus. The catalysed reaction is ATP + H2O = ADP + phosphate + H(+). Its function is as follows. ATP-binding RNA helicase involved in the biogenesis of 60S ribosomal subunits and is required for the normal formation of 25S and 5.8S rRNAs. The polypeptide is ATP-dependent RNA helicase dbp9 (dbp9) (Neosartorya fischeri (strain ATCC 1020 / DSM 3700 / CBS 544.65 / FGSC A1164 / JCM 1740 / NRRL 181 / WB 181) (Aspergillus fischerianus)).